Consider the following 417-residue polypeptide: Proteasome-activating nucleotidase (417 aa).

Residues 24–78 (SKYLLDRVKQLEERNVRLKEEYRKIELEKKSVENKKVQYEREIRKLTSELDRLKT) are a coiled coil. Residues 203–208 (GTGKTL) and histidine 342 each bind ATP. Positions 415 to 417 (MFA) are docks into pockets in the proteasome alpha-ring to cause gate opening.

The protein belongs to the AAA ATPase family. In terms of assembly, homohexamer. The hexameric complex has a two-ring architecture resembling a top hat that caps the 20S proteasome core at one or both ends. Upon ATP-binding, the C-terminus of PAN interacts with the alpha-rings of the proteasome core by binding to the intersubunit pockets.

It is found in the cytoplasm. In terms of biological role, ATPase which is responsible for recognizing, binding, unfolding and translocation of substrate proteins into the archaeal 20S proteasome core particle. Is essential for opening the gate of the 20S proteasome via an interaction with its C-terminus, thereby allowing substrate entry and access to the site of proteolysis. Thus, the C-termini of the proteasomal ATPase function like a 'key in a lock' to induce gate opening and therefore regulate proteolysis. Unfolding activity requires energy from ATP hydrolysis, whereas ATP binding alone promotes ATPase-20S proteasome association which triggers gate opening, and supports translocation of unfolded substrates. The polypeptide is Proteasome-activating nucleotidase (Methanocella arvoryzae (strain DSM 22066 / NBRC 105507 / MRE50)).